Consider the following 546-residue polypeptide: CTP synthase (546 aa).

Residues 1 to 265 (MTKYVFVTGG…DEIVCHKLNI (265 aa)) form an amidoligase domain region. Residue S13 participates in CTP binding. A UTP-binding site is contributed by S13. Residues 14–19 (SLGKGI) and D71 contribute to the ATP site. Mg(2+) contacts are provided by D71 and E139. Residues 146-148 (DIE), 186-191 (KTKPTQ), and K222 each bind CTP. UTP is bound by residues 186–191 (KTKPTQ) and K222. Positions 290–543 (KIAFVGKYVD…VKAALANQKA (254 aa)) constitute a Glutamine amidotransferase type-1 domain. G351 contacts L-glutamine. Catalysis depends on C378, which acts as the Nucleophile; for glutamine hydrolysis. L-glutamine is bound by residues 379–382 (LGMQ), E402, and R469. Residues H516 and E518 contribute to the active site.

It belongs to the CTP synthase family. In terms of assembly, homotetramer.

It catalyses the reaction UTP + L-glutamine + ATP + H2O = CTP + L-glutamate + ADP + phosphate + 2 H(+). The catalysed reaction is L-glutamine + H2O = L-glutamate + NH4(+). It carries out the reaction UTP + NH4(+) + ATP = CTP + ADP + phosphate + 2 H(+). It participates in pyrimidine metabolism; CTP biosynthesis via de novo pathway; CTP from UDP: step 2/2. Allosterically activated by GTP, when glutamine is the substrate; GTP has no effect on the reaction when ammonia is the substrate. The allosteric effector GTP functions by stabilizing the protein conformation that binds the tetrahedral intermediate(s) formed during glutamine hydrolysis. Inhibited by the product CTP, via allosteric rather than competitive inhibition. In terms of biological role, catalyzes the ATP-dependent amination of UTP to CTP with either L-glutamine or ammonia as the source of nitrogen. Regulates intracellular CTP levels through interactions with the four ribonucleotide triphosphates. The polypeptide is CTP synthase (Dechloromonas aromatica (strain RCB)).